The sequence spans 1106 residues: Inversin (1106 aa).

ANK repeat units lie at residues 13 to 42 (SLASEVHAAAVNGDKSTLLKLIAGNSELKD), 47 to 76 (FGRTPLMYCVLADRVDCAEALLKAGADVNR), 80 to 110 (SRRTALHLAAQKGNYRFMKLLLARRGNWMQK), 113 to 144 (EGMTPLHLTTRHKSPKCLALLLKHMAPGEVDT), 148 to 177 (NKQTALHWSAYYNNPEHVKLLIKHDSNIGI), 181 to 213 (EGKIPLHWAANNKDPSAIHTVKCILEAAPTESL), 220 to 250 (EGRTPLHFAVADGNVAVVDVLTSYEGCNVTS), 254 to 285 (LFRTPLHWAALLGHAQIVHLLLERNKFGTIPS), 288 to 317 (QGATPLHYAAQSNFAETVEVFLKHPSVKDD), 321 to 350 (EGRTSFMWAAGKGSDNVIRTMLDLKLDIDI), 356 to 385 (YAGTALHAAALSGHVSTVKLLLERNAQVDA), 389 to 418 (MKHTPLFRACEMGHKEVIQTLIKGGARVDL), 422 to 451 (DGHSPLHWAALGGNADVCQILIENKINPNV), 455 to 484 (AGRTPLQCAAYGGYINCMVVLLENNADPNI), 488 to 517 (EGRTALHWLCNNGYLDAIKLLLGFDAFPNH), and 523 to 553 (ERYTPLDYALLGEHHEVIQFMLEHGALSIAA). The short motif at 490-498 (RTALHWLCN) is the D-box 1 element. Residues 555–584 (QDIAAFKIQAVYKGYKVRKAFQERKNLLMK) form the IQ 1 domain. A compositionally biased stretch (basic and acidic residues) spans 589–607 (RKDAAAKKREEESKRKEAS). 4 disordered regions span residues 589–615 (RKDAAAKKREEESKRKEASLQKGMQNM), 636–688 (LQLS…ELQS), 746–782 (ANGTSAHGNRRHASACGTAGAGEKTRDQSLSSSGNRG), and 809–833 (AVPKSKRHQQKSRHKEVNYERCSPA). Composition is skewed to polar residues over residues 636 to 645 (LQLSNKQTDL) and 653 to 666 (VSASQIQLGRNSRG). Residues 812-822 (KSKRHQQKSRH) show a composition bias toward basic residues. The short motif at 944–952 (RKELFRKKN) is the D-box 2 element. In terms of domain architecture, IQ 2 spans 951–980 (KNYAATVIQRTWRSYRLRQELSQLLSAKRQ).

Binds calmodulin via its IQ domains. Interacts with APC2.

The protein resides in the cytoplasm. Its subcellular location is the cytoskeleton. Required for normal renal development and establishment of left-right axis. Probably acts as a molecular switch between different Wnt signaling pathways. Inhibits the canonical Wnt pathway by targeting cytoplasmic disheveled for degradation by the ubiquitin-proteasome. This suggests that it is required in renal development to oppose the repression of terminal differentiation of tubular epithelial cells by Wnt signaling. The chain is Inversin (INVS) from Gallus gallus (Chicken).